Consider the following 301-residue polypeptide: MLTFQQIILKLQSYWADKGCALLQPYDMEVGAGTSHTATFLRALGPEPWKAAYVQPSRRPKDGRYGENPNRLQHYYQYQVVLKPAPSNILELYLGSLEALGFDLKKNDIRFVEDDWENPTLGAWGLGWEVWLNGMEVTQFTYFQQVGGIDCKPITGEITYGLERLAMYLQGVDNVYNLTWTDGLSYGDVYKQNEVEQSTYNFEHSDAEFLFTAFAAHEKQARHLMTEQLALPAYEQVLKAAHSFNLLDARGAISVTERAAYIGRIRNLARSVAQSYYESRQRLGFPMAPREWVAQITKKAA.

The protein belongs to the class-II aminoacyl-tRNA synthetase family. In terms of assembly, tetramer of two alpha and two beta subunits.

Its subcellular location is the cytoplasm. The enzyme catalyses tRNA(Gly) + glycine + ATP = glycyl-tRNA(Gly) + AMP + diphosphate. The polypeptide is Glycine--tRNA ligase alpha subunit (Variovorax paradoxus (strain S110)).